The following is a 109-amino-acid chain: MSGVWVFKNGVVRLVEKQQATAGTAVAGGRRKALVHTPSGQVVSSYAALEARLTALGWERYYEDPSLFQFHKRGSLDLISLPADFSAFSSVHMYDIVVKNRDSFRVVDA.

A D-box motif is present at residues 73–81 (RGSLDLISL).

It belongs to the FPF1 family. As to quaternary structure, interacts with RPT4. Post-translationally, ubiquitinated. RPT4 mediates its proteasome-dependent degradation. Specifically expressed in the apical meristem, the elongation zone of root tip, steles of the branch zone, and the young lateral root. Also expressed in spikes. Expressed in roots and spikes (at protein level).

The protein localises to the cytoplasm. Its subcellular location is the nucleus. Functionally, GTP-binding protein that functions in the development of root systems, which are mediated by auxin. Acts as a cell cycle regulator during root development. Proteasome-mediated degradation of the protein is necessary for the transition of metaphase to anaphase in mitosis. The polypeptide is Flowering-promoting factor 1-like protein 1 (RAA1) (Oryza sativa subsp. japonica (Rice)).